A 627-amino-acid polypeptide reads, in one-letter code: MTTELLDRIHSPDDVRQLDRRELKALAEELRGFVLESVSRTGGHLSSNLGTVELTLALHRVFDTPHDRIVWDVGHQSYPHKILTGRRAGMASLRQEGGISGFPKRSESEYDAFGTAHSSTSISAALGMAVASRNAGIQRQHIAVIGDGAMSAGMAFEAMNNAGVTPDINLLVVLNDNDMSISPPVGALNRYLARLMSGRFYAAAKNVGRAMLQHVPPVLELARRFEEHAKGMVTPATLFEEFGFNYVGPIDGHDLDALVPTLQNLKALQGLQFLHVVTRKGHGYKLAEADPVLYHGPGKFDPAVGIQQGKASTRKTFTQVFGQWLCDMAERDERLVGITPAMREGSGLVEFERRFPRRYFDVGIAEQHAVTFAAGLACEGQKPVVAIYSTFLQRGYDQLIHDVALQNLDVTFALDRAGLVGADGATHAGNYDIAYLRCVPNMVVAAPSDENEARLLLSTCYEYPGPASVRYPRGAGRGAEISPGLDTVPMGKGIVRRQGRGIAILAFGTLTQAALAAAEALDATVADMRFVKPIDRELILQLAAGHDAIVTVEEAAIMGGAGSAVIEVLHHEGVVVPVLQLGLPDRFIDHGDQAALLAGLGLDAAGIERSIRARFEKSNLQSGAQTK.

Thiamine diphosphate is bound by residues H75 and 116–118; that span reads AHS. D147 contacts Mg(2+). Thiamine diphosphate-binding positions include 148-149, N177, Y284, and E366; that span reads GA. N177 contributes to the Mg(2+) binding site.

It belongs to the transketolase family. DXPS subfamily. As to quaternary structure, homodimer. It depends on Mg(2+) as a cofactor. Requires thiamine diphosphate as cofactor.

It catalyses the reaction D-glyceraldehyde 3-phosphate + pyruvate + H(+) = 1-deoxy-D-xylulose 5-phosphate + CO2. Its pathway is metabolic intermediate biosynthesis; 1-deoxy-D-xylulose 5-phosphate biosynthesis; 1-deoxy-D-xylulose 5-phosphate from D-glyceraldehyde 3-phosphate and pyruvate: step 1/1. Catalyzes the acyloin condensation reaction between C atoms 2 and 3 of pyruvate and glyceraldehyde 3-phosphate to yield 1-deoxy-D-xylulose-5-phosphate (DXP). This chain is 1-deoxy-D-xylulose-5-phosphate synthase, found in Bordetella petrii (strain ATCC BAA-461 / DSM 12804 / CCUG 43448).